Here is a 171-residue protein sequence, read N- to C-terminus: Ribosome maturation factor RimM (171 aa).

The region spanning 96–168 (EDGFYDHELE…TATITPPEGL (73 aa)) is the PRC barrel domain.

Belongs to the RimM family. In terms of assembly, binds ribosomal protein uS19.

Its subcellular location is the cytoplasm. Its function is as follows. An accessory protein needed during the final step in the assembly of 30S ribosomal subunit, possibly for assembly of the head region. Essential for efficient processing of 16S rRNA. May be needed both before and after RbfA during the maturation of 16S rRNA. It has affinity for free ribosomal 30S subunits but not for 70S ribosomes. This is Ribosome maturation factor RimM from Corynebacterium glutamicum (strain ATCC 13032 / DSM 20300 / JCM 1318 / BCRC 11384 / CCUG 27702 / LMG 3730 / NBRC 12168 / NCIMB 10025 / NRRL B-2784 / 534).